The sequence spans 138 residues: Thyrotropin subunit beta (138 aa).

A signal peptide spans 1–20; it reads MTATFLMSLLFGLAFGQTMS. 6 cysteine pairs are disulfide-bonded: cysteine 22-cysteine 72, cysteine 36-cysteine 87, cysteine 39-cysteine 125, cysteine 47-cysteine 103, cysteine 51-cysteine 105, and cysteine 108-cysteine 115. Asparagine 43 is a glycosylation site (N-linked (GlcNAc...) asparagine). Positions 133–138 are excised as a propeptide; the sequence is LVGFPV.

Belongs to the glycoprotein hormones subunit beta family. Heterodimer of a common alpha chain and a unique beta chain which confers biological specificity to thyrotropin, lutropin, follitropin and gonadotropin.

Its subcellular location is the secreted. Its function is as follows. Indispensable for the control of thyroid structure and metabolism. The protein is Thyrotropin subunit beta (TSHB) of Monodelphis domestica (Gray short-tailed opossum).